We begin with the raw amino-acid sequence, 26 residues long: Acetylcholine receptor subunit delta (26 aa).

The protein belongs to the ligand-gated ion channel (TC 1.A.9) family. Acetylcholine receptor (TC 1.A.9.1) subfamily. Pentamer of two alpha chains, and one each of the beta, delta, and gamma chains.

The protein resides in the postsynaptic cell membrane. It is found in the cell membrane. It carries out the reaction K(+)(in) = K(+)(out). The enzyme catalyses Na(+)(in) = Na(+)(out). After binding acetylcholine, the AChR responds by an extensive change in conformation that affects all subunits and leads to opening of an ion-conducting channel across the plasma membrane. This Electrophorus electricus (Electric eel) protein is Acetylcholine receptor subunit delta (chrnd).